An 887-amino-acid chain; its full sequence is Cadherin-1 (887 aa).

Positions 1 to 26 are cleaved as a signal peptide; that stretch reads MGRRWGSPALQRFPVLVLLLLLQVCG. The propeptide occupies 27 to 160; it reads RRCDEAAPCQ…DPGFLRRQKR (134 aa). Cadherin domains follow at residues 161–268, 269–381, 382–493, 494–599, and 600–704; these read DWVI…KPVF, IKEV…IPIF, NPTM…PPVF, VPPI…DNGP, and TPEP…RRSY. At 161–714 the chain is on the extracellular side; the sequence is DWVIPPISCL…IVGGLGVPAI (554 aa). Asp-263 serves as a coordination point for Ca(2+). N-linked (GlcNAc...) asparagine glycosylation occurs at Asn-291. Asp-294 contacts Ca(2+). Residue Asn-346 is glycosylated (N-linked (GlcNAc...) asparagine). N-linked (GlcNAc...) asparagine glycans are attached at residues Asn-564 and Asn-643. The chain crosses the membrane as a helical span at residues 715–735; the sequence is LGILGGILALLILLLLLLLFA. Residues 736–887 are Cytoplasmic-facing; the sequence is RRRKVEKEPL…ELYGGGEDDE (152 aa). Residues 745-770 form a disordered region; sequence LLPPEDDMRDNVYNYDEEGGGEEDQD. The segment covering 759-770 has biased composition (acidic residues); it reads YDEEGGGEEDQD.

Homodimer. Interacts with CTNNA2. In terms of tissue distribution, expressed in the liver.

It localises to the cell junction. Its subcellular location is the adherens junction. It is found in the cell membrane. The protein resides in the endosome. The protein localises to the golgi apparatus. It localises to the trans-Golgi network. Its subcellular location is the cytoplasm. It is found in the desmosome. In terms of biological role, cadherins are calcium-dependent cell adhesion proteins. They preferentially interact with themselves in a homophilic manner in connecting cells; cadherins may thus contribute to the sorting of heterogeneous cell types. Promotes organization of radial actin fiber structure and cellular response to contractile forces, via anchoring of radial actin fibers to CDH1 junction complexes at the cell membrane. E-cadherin is a ligand for integrin alpha-E/beta-7. The protein is Cadherin-1 (CDH1) of Gallus gallus (Chicken).